Reading from the N-terminus, the 490-residue chain is GTPase Der (490 aa).

EngA-type G domains are found at residues 3-166 (PVVA…MDDV) and 203-376 (IKLA…DSST). GTP-binding positions include 9 to 16 (GRPNVGKS), 56 to 60 (DTGGI), 118 to 121 (NKTD), 209 to 216 (GRPNVGKS), 256 to 260 (DTAGV), and 321 to 324 (NKWD). The KH-like domain maps to 377–461 (RRVSTAMLTR…PIRIQFKEGE (85 aa)).

This sequence belongs to the TRAFAC class TrmE-Era-EngA-EngB-Septin-like GTPase superfamily. EngA (Der) GTPase family. As to quaternary structure, associates with the 50S ribosomal subunit.

Functionally, GTPase that plays an essential role in the late steps of ribosome biogenesis. The chain is GTPase Der from Salmonella choleraesuis (strain SC-B67).